We begin with the raw amino-acid sequence, 201 residues long: Proteasome subunit beta 1 (201 aa).

Methionine 1 is a propeptide (removed in mature form; by autocatalysis). The Nucleophile role is filled by threonine 2.

This sequence belongs to the peptidase T1B family. As to quaternary structure, the 20S proteasome core is composed of 14 alpha and 14 beta subunits that assemble into four stacked heptameric rings, resulting in a barrel-shaped structure. The two inner rings, each composed of seven catalytic beta subunits, are sandwiched by two outer rings, each composed of seven alpha subunits. The catalytic chamber with the active sites is on the inside of the barrel. Has a gated structure, the ends of the cylinder being occluded by the N-termini of the alpha-subunits. Is capped at one or both ends by the proteasome regulatory ATPase, PAN.

The protein resides in the cytoplasm. It carries out the reaction Cleavage of peptide bonds with very broad specificity.. The formation of the proteasomal ATPase PAN-20S proteasome complex, via the docking of the C-termini of PAN into the intersubunit pockets in the alpha-rings, triggers opening of the gate for substrate entry. Interconversion between the open-gate and close-gate conformations leads to a dynamic regulation of the 20S proteasome proteolysis activity. Its function is as follows. Component of the proteasome core, a large protease complex with broad specificity involved in protein degradation. The chain is Proteasome subunit beta 1 from Pyrobaculum neutrophilum (strain DSM 2338 / JCM 9278 / NBRC 100436 / V24Sta) (Thermoproteus neutrophilus).